The chain runs to 362 residues: Holliday junction branch migration complex subunit RuvB (362 aa).

Residues 1-20 form a disordered region; that stretch reads MKRTIMTNTDTFEQPNTGAN. The tract at residues 15 to 203 is large ATPase domain (RuvB-L); the sequence is PNTGANEESL…FGFTAHLDFY (189 aa). ATP is bound by residues leucine 42, arginine 43, glycine 84, lysine 87, threonine 88, threonine 89, 150-152, arginine 193, tyrosine 203, and arginine 240; that span reads EDF. Mg(2+) is bound at residue threonine 88. A small ATPAse domain (RuvB-S) region spans residues 204–274; that stretch reads PHEELEKLIE…DVKEALALYQ (71 aa). Positions 277–362 are head domain (RuvB-H); sequence TEGLDRLDIA…ESAYDVNEMS (86 aa). 2 residues coordinate DNA: arginine 332 and arginine 337.

The protein belongs to the RuvB family. Homohexamer. Forms an RuvA(8)-RuvB(12)-Holliday junction (HJ) complex. HJ DNA is sandwiched between 2 RuvA tetramers; dsDNA enters through RuvA and exits via RuvB. An RuvB hexamer assembles on each DNA strand where it exits the tetramer. Each RuvB hexamer is contacted by two RuvA subunits (via domain III) on 2 adjacent RuvB subunits; this complex drives branch migration. In the full resolvosome a probable DNA-RuvA(4)-RuvB(12)-RuvC(2) complex forms which resolves the HJ.

The protein resides in the cytoplasm. The catalysed reaction is ATP + H2O = ADP + phosphate + H(+). The RuvA-RuvB-RuvC complex processes Holliday junction (HJ) DNA during genetic recombination and DNA repair, while the RuvA-RuvB complex plays an important role in the rescue of blocked DNA replication forks via replication fork reversal (RFR). RuvA specifically binds to HJ cruciform DNA, conferring on it an open structure. The RuvB hexamer acts as an ATP-dependent pump, pulling dsDNA into and through the RuvAB complex. RuvB forms 2 homohexamers on either side of HJ DNA bound by 1 or 2 RuvA tetramers; 4 subunits per hexamer contact DNA at a time. Coordinated motions by a converter formed by DNA-disengaged RuvB subunits stimulates ATP hydrolysis and nucleotide exchange. Immobilization of the converter enables RuvB to convert the ATP-contained energy into a lever motion, pulling 2 nucleotides of DNA out of the RuvA tetramer per ATP hydrolyzed, thus driving DNA branch migration. The RuvB motors rotate together with the DNA substrate, which together with the progressing nucleotide cycle form the mechanistic basis for DNA recombination by continuous HJ branch migration. Branch migration allows RuvC to scan DNA until it finds its consensus sequence, where it cleaves and resolves cruciform DNA. This chain is Holliday junction branch migration complex subunit RuvB, found in Bifidobacterium adolescentis (strain ATCC 15703 / DSM 20083 / NCTC 11814 / E194a).